Here is a 227-residue protein sequence, read N- to C-terminus: MFRPLLSFTLARLVSLPLHAQTFRAAKQDLNRLYQDHPVTFYCGCKIEYQGKKMSPDLASCGYEPRKQAKRANRIEWEHVVPAWEFGHQLQCWQQGGRKNCGKTDEFNQMEGDMHNLFPAIGEVNVDRANYRFSDWNGTPHQYGQCQMLVDFKERQVQPPKGLVRGQIARAYLYMSQQYGPGLAAQQRKLFEAWDRQYPADGWECERNRRIGKLQGNTNPFIEKQCQ.

The signal sequence occupies residues 1–20 (MFRPLLSFTLARLVSLPLHA).

This sequence belongs to the EndA/NucM nuclease family.

The protein resides in the secreted. The chain is Extracellular deoxyribonuclease from Aeromonas hydrophila.